Consider the following 266-residue polypeptide: Killer cell lectin-like receptor 6 (266 aa).

Topologically, residues 1 to 44 (MSEPEVTYSTVRLHKSSRLQKLVRHEETQGPREAGYRKCSVCWQ) are cytoplasmic. The chain crosses the membrane as a helical; Signal-anchor for type II membrane protein span at residues 45 to 66 (LIVKALGILCFLLLITVAVLAV). The Extracellular portion of the chain corresponds to 67-266 (KIFQYGQHNQ…CGKKLDKFPH (200 aa)). N-linked (GlcNAc...) asparagine glycans are attached at residues Asn87 and Asn104. Positions 143-261 (GVKYWFCYRT…SHYCICGKKL (119 aa)) constitute a C-type lectin domain. 4 disulfide bridges follow: Cys149-Cys154, Cys167-Cys255, Cys171-Cys257, and Cys236-Cys249.

In terms of assembly, homodimer; disulfide-linked.

It localises to the membrane. Receptor on natural killer (NK) cells for class I MHC. The sequence is that of Killer cell lectin-like receptor 6 (Klra6) from Mus musculus (Mouse).